A 955-amino-acid chain; its full sequence is uncharacterized protein (955 aa).

The 68-residue stretch at 23–90 (ANNYLEEFQK…RNSLLQLFLA (68 aa)) folds into the Importin N-terminal domain.

This is an uncharacterized protein from Schizosaccharomyces pombe (strain 972 / ATCC 24843) (Fission yeast).